We begin with the raw amino-acid sequence, 237 residues long: Small ribosomal subunit protein uS3 (237 aa).

The KH type-2 domain occupies 39–107; sequence IRAYLMEELK…ETHLNIVEVR (69 aa). Positions 213–237 are disordered; that stretch reads MASERRATESDNQGGSGRERRRENA.

The protein belongs to the universal ribosomal protein uS3 family. In terms of assembly, part of the 30S ribosomal subunit. Forms a tight complex with proteins S10 and S14.

Its function is as follows. Binds the lower part of the 30S subunit head. Binds mRNA in the 70S ribosome, positioning it for translation. The polypeptide is Small ribosomal subunit protein uS3 (Rhizobium meliloti (strain 1021) (Ensifer meliloti)).